The sequence spans 122 residues: Small ribosomal subunit protein uS13 (122 aa).

The segment at 94 to 122 (RGLPVRGQRTKTNARQRKGPRPAIGGRKK) is disordered.

This sequence belongs to the universal ribosomal protein uS13 family. As to quaternary structure, part of the 30S ribosomal subunit. Forms a loose heterodimer with protein S19. Forms two bridges to the 50S subunit in the 70S ribosome.

Located at the top of the head of the 30S subunit, it contacts several helices of the 16S rRNA. In the 70S ribosome it contacts the 23S rRNA (bridge B1a) and protein L5 of the 50S subunit (bridge B1b), connecting the 2 subunits; these bridges are implicated in subunit movement. Contacts the tRNAs in the A and P-sites. The polypeptide is Small ribosomal subunit protein uS13 (Rubrobacter xylanophilus (strain DSM 9941 / JCM 11954 / NBRC 16129 / PRD-1)).